The following is a 471-amino-acid chain: Trigger factor (471 aa).

Positions D166–P245 constitute a PPIase FKBP-type domain. The tract at residues A442–F471 is disordered. A compositionally biased stretch (acidic residues) spans G447–E456.

Belongs to the FKBP-type PPIase family. Tig subfamily.

Its subcellular location is the cytoplasm. It catalyses the reaction [protein]-peptidylproline (omega=180) = [protein]-peptidylproline (omega=0). Its function is as follows. Involved in protein export. Acts as a chaperone by maintaining the newly synthesized protein in an open conformation. Functions as a peptidyl-prolyl cis-trans isomerase. This chain is Trigger factor, found in Renibacterium salmoninarum (strain ATCC 33209 / DSM 20767 / JCM 11484 / NBRC 15589 / NCIMB 2235).